Reading from the N-terminus, the 89-residue chain is Small ribosomal subunit protein uS15 (89 aa).

Belongs to the universal ribosomal protein uS15 family. Part of the 30S ribosomal subunit. Forms a bridge to the 50S subunit in the 70S ribosome, contacting the 23S rRNA.

One of the primary rRNA binding proteins, it binds directly to 16S rRNA where it helps nucleate assembly of the platform of the 30S subunit by binding and bridging several RNA helices of the 16S rRNA. Functionally, forms an intersubunit bridge (bridge B4) with the 23S rRNA of the 50S subunit in the ribosome. The protein is Small ribosomal subunit protein uS15 of Latilactobacillus sakei subsp. sakei (strain 23K) (Lactobacillus sakei subsp. sakei).